A 388-amino-acid polypeptide reads, in one-letter code: Lysocardiolipin acyltransferase 1 (388 aa).

2 consecutive transmembrane segments (helical) span residues 9–29 (FLLF…GPLL) and 46–66 (IVAT…GVKV). Residues 85–90 (HRTRLD) carry the HXXXXD motif motif. 2 helical membrane passes run 321–341 (IILV…CASL) and 342–362 (CLCP…LCQQ).

The protein belongs to the 1-acyl-sn-glycerol-3-phosphate acyltransferase family.

The protein localises to the endoplasmic reticulum membrane. The catalysed reaction is a 1-acyl-sn-glycero-3-phosphate + an acyl-CoA = a 1,2-diacyl-sn-glycero-3-phosphate + CoA. It carries out the reaction a 1-acyl-sn-glycero-3-phospho-(1D-myo-inositol) + an acyl-CoA = a 1,2-diacyl-sn-glycero-3-phospho-(1D-myo-inositol) + CoA. The enzyme catalyses 1-acyl-sn-glycero-3-phospho-(1'-sn-glycerol) + an acyl-CoA = a 1,2-diacyl-sn-glycero-3-phospho-(1'-sn-glycerol) + CoA. It catalyses the reaction 1-hexadecanoyl-sn-glycero-3-phosphate + (9Z)-octadecenoyl-CoA = 1-hexadecanoyl-2-(9Z-octadecenoyl)-sn-glycero-3-phosphate + CoA. The catalysed reaction is 1-(9Z-octadecenoyl)-sn-glycero-3-phosphate + (9Z)-octadecenoyl-CoA = 1,2-di-(9Z-octadecenoyl)-sn-glycero-3-phosphate + CoA. It carries out the reaction 1-(9Z,12Z)-octadecadienoyl-sn-glycero-3-phosphate + (9Z)-octadecenoyl-CoA = 1-(9Z,12Z)-octadecadienoyl-2-(9Z)-octadecenoyl-sn-glycero-3-phosphate + CoA. The enzyme catalyses 1-(9Z,12Z,15Z)-octadecatrienoyl-sn-glycero-3-phosphate + (9Z)-octadecenoyl-CoA = 1-(9Z,12Z,15Z)-octadecatrienoyl-2-(9Z)-octadecenoyl-sn-glycero-3-phosphate + CoA. It catalyses the reaction 1-(9Z-octadecenoyl)-sn-glycero-3-phosphate + hexadecanoyl-CoA = 1-(9Z)-octadecenoyl-2-hexadecanoyl-sn-glycero-3-phosphate + CoA. The catalysed reaction is 1-(9Z-octadecenoyl)-sn-glycero-3-phosphate + octadecanoyl-CoA = 1-(9Z-octadecenoyl)-2-octadecanoyl-sn-glycero-3-phosphate + CoA. It carries out the reaction 1-acyl-sn-glycero-3-phospho-(1'-sn-glycerol) + (9Z)-octadecenoyl-CoA = 1-acyl-2-(9Z-octadecenoyl)-sn-glycero-3-phospho-(1'-sn-glycerol) + CoA. The enzyme catalyses a 1-acyl-sn-glycero-3-phospho-(1D-myo-inositol) + (9Z)-octadecenoyl-CoA = a 1-acyl-2-(9Z-octadecenoyl)-sn-glycero-3-phospho-(1D-myo-inositol) + CoA. It catalyses the reaction 1-hexadecanoyl-sn-glycero-3-phospho-(1D-myo-inositol) + hexadecanoyl-CoA = 1,2-dihexadecanoyl-sn-glycero-3-phospho-(1D-myo-inositol) + CoA. The catalysed reaction is 1-hexadecanoyl-sn-glycero-3-phospho-(1D-myo-inositol) + octadecanoyl-CoA = 1-hexadecanoyl-2-octadecanoyl-sn-glycero-3-phospho-(1D-myo-inositol) + CoA. It carries out the reaction 1-hexadecanoyl-sn-glycero-3-phospho-(1D-myo-inositol) + (9Z)-octadecenoyl-CoA = 1-hexadecanoyl-2-(9Z-octadecenoyl)-sn-glycero-3-phospho-(1D-myo-inositol) + CoA. The enzyme catalyses 1-hexadecanoyl-sn-glycero-3-phospho-(1D-myo-inositol) + (9Z,12Z)-octadecadienoyl-CoA = 1-hexadecanoyl-2-(9Z,12Z-octadecadienoyl)-sn-glycero-3-phospho-(1D-myo-inositol) + CoA. It catalyses the reaction 1-hexadecanoyl-sn-glycero-3-phospho-(1D-myo-inositol) + (5Z,8Z,11Z,14Z)-eicosatetraenoyl-CoA = 1-hexadecanoyl-2-(5Z,8Z,11Z,14Z-eicosatetraenoyl)-sn-glycero-3-phospho-D-myo-inositol + CoA. The catalysed reaction is 1-hexadecanoyl-sn-glycero-3-phospho-(1'-sn-glycerol) + hexadecanoyl-CoA = 1,2-dihexadecanoyl-sn-glycero-3-phospho-(1'-sn-glycerol) + CoA. It carries out the reaction 1-hexadecanoyl-sn-glycero-3-phospho-(1'-sn-glycerol) + octadecanoyl-CoA = 1-hexadecanoyl-2-octadecanoyl-sn-glycero-3-phospho-(1'-sn-glycerol) + CoA. The enzyme catalyses 1-hexadecanoyl-sn-glycero-3-phospho-(1'-sn-glycerol) + (9Z)-octadecenoyl-CoA = 1-hexadecanoyl-2-(9Z-octadecenoyl)-sn-glycero-3-phospho-(1'-sn-glycerol) + CoA. It catalyses the reaction 1-hexadecanoyl-sn-glycero-3-phospho-(1'-sn-glycerol) + (9Z,12Z)-octadecadienoyl-CoA = 1-hexadecanoyl-2-(9Z,12Z-octadecadienoyl)-sn-glycero-3-phospho-(1'-sn-glycerol) + CoA. The catalysed reaction is 1-tetradecanoyl-sn-glycero-3-phospho-(1'-sn-glycerol) + (9Z)-octadecenoyl-CoA = 1-tetradecanoyl-2-(9Z-octadecenoyl)-sn-glycero-3-phospho-(1'-sn-glycerol) + CoA. It carries out the reaction 1-octadecanoyl-sn-glycero-3-phospho-(1'-sn-glycerol) + (9Z)-octadecenoyl-CoA = 1-octadecanoyl-2-(9Z-octadecenoyl)-sn-glycero-3-phospho-(1'-sn-glycerol) + CoA. The enzyme catalyses 1-(9Z-octadecenoyl)-sn-glycero-3-phospho-(1'-sn-glycerol) + (9Z)-octadecenoyl-CoA = 1,2-di-(9Z-octadecenoyl)-sn-glycero-3-phospho-(1'-sn-glycerol) + CoA. It catalyses the reaction 1-hexadecanoyl-sn-glycero-3-phospho-(1D-myo-inositol) + dodecanoyl-CoA = 1-hexadecanoyl-2-dodecanoyl-sn-glycero-3-phospho-(1D-myo-inositol) + CoA. The catalysed reaction is 1',3'-bis-[1-acyl-sn-glycero-3-phospho]-glycerol + (9Z)-octadecenoyl-CoA = 1'-[1-acyl-2-(9Z)-octadecenoyl-sn-glycero-3-phospho],3'-[1-acyl,2-hydroxy-sn-glycero-3-phospho]-glycerol + CoA. It carries out the reaction 1'-[1,2-diacyl-sn-glycero-3-phospho],3'-[1-acyl-sn-glycero-3-phospho]-glycerol + (9Z)-octadecenoyl-CoA = 1'-[1,2-diacyl-sn-glycero-3-phospho],3'-[1-acyl,2-(9Z)-octadecenoyl-sn-glycero-3-phospho]-glycerol + CoA. The enzyme catalyses 1'-[1,2-diacyl-sn-glycero-3-phospho],3'-[1-acyl-sn-glycero-3-phospho]-glycerol + (9Z,12Z)-octadecadienoyl-CoA = 1'-[1,2-diacyl-sn-glycero-3-phospho],3'-[1-acyl,2-(9Z,12Z)-octadecadienoyl-sn-glycero-3-phospho]-glycerol + CoA. It catalyses the reaction 1'-[1,2-diacyl-sn-glycero-3-phospho],3'-[1-acyl-sn-glycero-3-phospho]-glycerol + dodecanoyl-CoA = 1'-[1,2-diacyl-sn-glycero-3-phospho],3'-[1-acyl,2-dodecanoyl-sn-glycero-3-phospho]-glycerol + CoA. The catalysed reaction is 1',3'-bis-[1-acyl-sn-glycero-3-phospho]-glycerol + dodecanoyl-CoA = 1'-[1-acyl-2-dodecanoyl-sn-glycero-3-phospho],3'-[1-acyl,2-hydroxy-sn-glycero-3-phospho]-glycerol + CoA. It carries out the reaction a 1-acyl-sn-glycero-3-phosphate + (9Z)-octadecenoyl-CoA = a 1-acyl-2-(9Z-octadecenoyl)-sn-glycero-3-phosphate + CoA. The enzyme catalyses 1',3'-bis-[1-acyl-sn-glycero-3-phospho]-glycerol + (9Z,12Z)-octadecadienoyl-CoA = 1'-[1-acyl-2-(9Z,12Z)-octadecadienoyl-sn-glycero-3-phospho],3'-[1-acyl,2-hydroxy-sn-glycero-3-phospho]-glycerol + CoA. It catalyses the reaction 1',3'-bis-[1-acyl-sn-glycero-3-phospho]-glycerol + hexadecanoyl-CoA = 1'-[1-acyl-2-hexadecanoyl-sn-glycero-3-phospho],3'-[1-acyl,2-hydroxy-sn-glycero-3-phospho]-glycerol + CoA. The catalysed reaction is 1',3'-bis-[1-acyl-sn-glycero-3-phospho]-glycerol + octadecanoyl-CoA = 1'-[1-acyl-2-octadecanoyl-sn-glycero-3-phospho],3'-[1-acyl,2-hydroxy-sn-glycero-3-phospho]-glycerol + CoA. It carries out the reaction 1'-[1,2-diacyl-sn-glycero-3-phospho],3'-[1-acyl-sn-glycero-3-phospho]-glycerol + octanoyl-CoA = 1'-[1,2-diacyl-sn-glycero-3-phospho],3'-[1-acyl,2-octanoyl-sn-glycero-3-phospho]-glycerol + CoA. The enzyme catalyses 1',3'-bis-[1-acyl-sn-glycero-3-phospho]-glycerol + octanoyl-CoA = 1'-[1-acyl-2-octanoyl-sn-glycero-3-phospho],3'-[1-acyl,2-hydroxy-sn-glycero-3-phospho]-glycerol + CoA. It catalyses the reaction 1'-[1,2-diacyl-sn-glycero-3-phospho],3'-[1-acyl-sn-glycero-3-phospho]-glycerol + hexadecanoyl-CoA = 1'-[1,2-diacyl-sn-glycero-3-phospho],3'-[1-acyl,2-hexadecanoyl-sn-glycero-3-phospho]-glycerol + CoA. The catalysed reaction is 1'-[1,2-diacyl-sn-glycero-3-phospho],3'-[1-acyl-sn-glycero-3-phospho]-glycerol + (5Z,8Z,11Z,14Z)-eicosatetraenoyl-CoA = 1'-[1,2-diacyl-sn-glycero-3-phospho],3'-[1-acyl,2-(5Z,8Z,11Z,14Z)-eicosatetraenoyl-sn-glycero-3-phospho]-glycerol + CoA. It carries out the reaction 1',3'-bis-[1-acyl-sn-glycero-3-phospho]-glycerol + (5Z,8Z,11Z,14Z)-eicosatetraenoyl-CoA = 1'-[1-acyl-2-(5Z,8Z,11Z,14Z)-eicosatetraenoyl-sn-glycero-3-phospho],3'-[1-acyl,2-hydroxy-sn-glycero-3-phospho]-glycerol + CoA. The enzyme catalyses a 1-acyl-sn-glycero-3-phospho-(1D-myo-inositol) + octadecanoyl-CoA = a 1-acyl-2-octadecanoyl-sn-glycero-3-phospho-(1D-myo-inositol) + CoA. It catalyses the reaction a 2-acyl-sn-glycero-3-phospho-D-myo-inositol + octadecanoyl-CoA = 1-octadecanoyl-2-acyl-sn-glycero-3-phospho-1D-myo-inositol + CoA. Its pathway is phospholipid metabolism; CDP-diacylglycerol biosynthesis; CDP-diacylglycerol from sn-glycerol 3-phosphate: step 2/3. In terms of biological role, exhibits acyl-CoA:lysocardiolipin acyltransferase (ALCAT) activity; catalyzes the reacylation of lyso-cardiolipin to cardiolipin (CL), a key step in CL remodeling. Recognizes both monolysocardiolipin and dilysocardiolipin as substrates with a preference for linoleoyl-CoA and oleoyl-CoA as acyl donors. Also exhibits 1-acyl-sn-glycerol-3-phosphate acyltransferase activity (AGPAT) activity; converts 1-acyl-sn-glycerol-3- phosphate (lysophosphatidic acid or LPA) into 1,2-diacyl-sn-glycerol-3- phosphate (phosphatidic acid or PA) by incorporating an acyl moiety at the sn-2 position of the glycerol backbone. Possesses both lysophosphatidylinositol acyltransferase (LPIAT) and lysophosphatidylglycerol acyltransferase (LPGAT) activities. Required for establishment of the hematopoietic and endothelial lineages. This chain is Lysocardiolipin acyltransferase 1 (lclat1), found in Danio rerio (Zebrafish).